A 543-amino-acid chain; its full sequence is Chaperonin GroEL (543 aa).

Residues 30–33 (TLGP), Lys51, 87–91 (DGTTT), Gly415, 480–482 (DAA), and Asp496 contribute to the ATP site.

Belongs to the chaperonin (HSP60) family. As to quaternary structure, forms a cylinder of 14 subunits composed of two heptameric rings stacked back-to-back. Interacts with the co-chaperonin GroES.

The protein resides in the cytoplasm. The enzyme catalyses ATP + H2O + a folded polypeptide = ADP + phosphate + an unfolded polypeptide.. Functionally, together with its co-chaperonin GroES, plays an essential role in assisting protein folding. The GroEL-GroES system forms a nano-cage that allows encapsulation of the non-native substrate proteins and provides a physical environment optimized to promote and accelerate protein folding. This Hydrogenobaculum sp. (strain Y04AAS1) protein is Chaperonin GroEL.